A 359-amino-acid polypeptide reads, in one-letter code: RNA-binding protein 4B (359 aa).

RRM domains are found at residues 2–72 and 78–148; these read VKLF…ASKN and TKLH…LSTS. The segment at 160–177 adopts a CCHC-type zinc-finger fold; the sequence is SGCYRCGKEGHWSKECPV. Positions 196-359 are interaction with TNPO3; it reads AVRTPYTMGY…YVDRARYSAF (164 aa).

In terms of assembly, interacts with TNPO3, which may mediate nuclear import of the protein. Expressed in liver and kidney (at protein level). Ubiquitously expressed.

It is found in the nucleus. Its subcellular location is the nucleolus. Its function is as follows. Required for the translational activation of PER1 mRNA in response to circadian clock. Binds directly to the 3'-UTR of the PER1 mRNA. This is RNA-binding protein 4B (RBM4B) from Homo sapiens (Human).